Here is a 704-residue protein sequence, read N- to C-terminus: Ion-translocating oxidoreductase complex subunit C (704 aa).

4Fe-4S ferredoxin-type domains lie at 368–397 (MGAPQEEKSCIRCSACADACPADLLPQQLY) and 407–436 (KATAHHIADCIECGACAWVCPSNIPLVQYF). [4Fe-4S] cluster contacts are provided by C377, C380, C383, C387, C416, C419, C422, and C426. A disordered region spans residues 536–684 (RAKQAAHPMA…PADPRKAAVA (149 aa)). Low complexity predominate over residues 556–565 (KAAVEAAIAR).

This sequence belongs to the 4Fe4S bacterial-type ferredoxin family. RnfC subfamily. The complex is composed of six subunits: RsxA, RsxB, RsxC, RsxD, RsxE and RsxG. The cofactor is [4Fe-4S] cluster.

It localises to the cell inner membrane. Functionally, part of a membrane-bound complex that couples electron transfer with translocation of ions across the membrane. Required to maintain the reduced state of SoxR. The polypeptide is Ion-translocating oxidoreductase complex subunit C (Salmonella choleraesuis (strain SC-B67)).